Here is a 339-residue protein sequence, read N- to C-terminus: Fructose-1,6-bisphosphatase class 1 (339 aa).

The Mg(2+) site is built by E101, D120, L122, and D123. Residues 123 to 126 (DGSS), N215, and K281 contribute to the substrate site. Residue E287 coordinates Mg(2+).

Belongs to the FBPase class 1 family. In terms of assembly, homotetramer. It depends on Mg(2+) as a cofactor.

It is found in the cytoplasm. It carries out the reaction beta-D-fructose 1,6-bisphosphate + H2O = beta-D-fructose 6-phosphate + phosphate. It functions in the pathway carbohydrate biosynthesis; gluconeogenesis. This chain is Fructose-1,6-bisphosphatase class 1, found in Polynucleobacter necessarius subsp. necessarius (strain STIR1).